Reading from the N-terminus, the 359-residue chain is Ribosomal RNA large subunit methyltransferase M (359 aa).

Residues Ser186, 219-222, Asp238, Asp258, and Asp275 each bind S-adenosyl-L-methionine; that span reads CPGG. The active-site Proton acceptor is Lys304.

It belongs to the class I-like SAM-binding methyltransferase superfamily. RNA methyltransferase RlmE family. RlmM subfamily. As to quaternary structure, monomer.

The protein localises to the cytoplasm. It carries out the reaction cytidine(2498) in 23S rRNA + S-adenosyl-L-methionine = 2'-O-methylcytidine(2498) in 23S rRNA + S-adenosyl-L-homocysteine + H(+). Its function is as follows. Catalyzes the 2'-O-methylation at nucleotide C2498 in 23S rRNA. The protein is Ribosomal RNA large subunit methyltransferase M of Aliivibrio fischeri (strain MJ11) (Vibrio fischeri).